The sequence spans 315 residues: Ribosomal RNA small subunit methyltransferase H (315 aa).

Residues 33 to 35 (GGH), aspartate 52, phenylalanine 84, aspartate 106, and glutamine 113 contribute to the S-adenosyl-L-methionine site. The segment at 294-315 (SSDELEENNRSHSAKLRVAEKL) is disordered.

The protein belongs to the methyltransferase superfamily. RsmH family.

The protein resides in the cytoplasm. It carries out the reaction cytidine(1402) in 16S rRNA + S-adenosyl-L-methionine = N(4)-methylcytidine(1402) in 16S rRNA + S-adenosyl-L-homocysteine + H(+). In terms of biological role, specifically methylates the N4 position of cytidine in position 1402 (C1402) of 16S rRNA. The chain is Ribosomal RNA small subunit methyltransferase H from Lactobacillus johnsonii (strain CNCM I-12250 / La1 / NCC 533).